Here is a 24-residue protein sequence, read N- to C-terminus: Acidic phospholipase A2 4 (24 aa).

The protein belongs to the phospholipase A2 family. Group II subfamily. It depends on Ca(2+) as a cofactor. Expressed by the venom gland.

Its subcellular location is the secreted. It catalyses the reaction a 1,2-diacyl-sn-glycero-3-phosphocholine + H2O = a 1-acyl-sn-glycero-3-phosphocholine + a fatty acid + H(+). In terms of biological role, PLA2 catalyzes the calcium-dependent hydrolysis of the 2-acyl groups in 3-sn-phosphoglycerides. The protein is Acidic phospholipase A2 4 of Trimeresurus stejnegeri (Chinese green tree viper).